A 277-amino-acid polypeptide reads, in one-letter code: Glutamate racemase (277 aa).

Substrate is bound by residues 9–10 and 41–42; these read DS and YG. Cys73 serves as the catalytic Proton donor/acceptor. Position 74–75 (74–75) interacts with substrate; it reads NT. The active-site Proton donor/acceptor is Cys183. 184-185 contributes to the substrate binding site; sequence TH.

The protein belongs to the aspartate/glutamate racemases family.

It carries out the reaction L-glutamate = D-glutamate. Its pathway is cell wall biogenesis; peptidoglycan biosynthesis. Functionally, provides the (R)-glutamate required for cell wall biosynthesis. The protein is Glutamate racemase of Shewanella denitrificans (strain OS217 / ATCC BAA-1090 / DSM 15013).